Consider the following 327-residue polypeptide: Tetraacyldisaccharide 4'-kinase (327 aa).

Residue T58–T65 participates in ATP binding.

Belongs to the LpxK family.

The enzyme catalyses a lipid A disaccharide + ATP = a lipid IVA + ADP + H(+). Its pathway is glycolipid biosynthesis; lipid IV(A) biosynthesis; lipid IV(A) from (3R)-3-hydroxytetradecanoyl-[acyl-carrier-protein] and UDP-N-acetyl-alpha-D-glucosamine: step 6/6. Its function is as follows. Transfers the gamma-phosphate of ATP to the 4'-position of a tetraacyldisaccharide 1-phosphate intermediate (termed DS-1-P) to form tetraacyldisaccharide 1,4'-bis-phosphate (lipid IVA). The polypeptide is Tetraacyldisaccharide 4'-kinase (Alcanivorax borkumensis (strain ATCC 700651 / DSM 11573 / NCIMB 13689 / SK2)).